A 112-amino-acid polypeptide reads, in one-letter code: MRNIYDLANELERGIRALPEYKNLVEKKEAIATDAEASALFKEFTDFQEDFYAKMQAGTMPTAEEQAAVQELGQKVEANALLKEYLTAQQSLSVYLNDIERIIFKPLQELNN.

Belongs to the UPF0342 family.

The sequence is that of UPF0342 protein STER_0693 from Streptococcus thermophilus (strain ATCC BAA-491 / LMD-9).